Here is a 64-residue protein sequence, read N- to C-terminus: Large ribosomal subunit protein bL35 (64 aa).

It belongs to the bacterial ribosomal protein bL35 family.

This Clavibacter michiganensis subsp. michiganensis (strain NCPPB 382) protein is Large ribosomal subunit protein bL35.